A 447-amino-acid polypeptide reads, in one-letter code: Voltage-gated purine nucleotide uniporter SLC17A9 (447 aa).

The disordered stretch occupies residues 1-26; the sequence is MPSQRSSLMQPIPEETRKTPSAAAED. 11 helical membrane-spanning segments follow: residues 40 to 60, 74 to 94, 103 to 123, 129 to 149, 169 to 189, 192 to 212, 252 to 272, 287 to 307, 327 to 347, 380 to 400, and 413 to 433; these read ILLL…VCTV, GIVL…GGHL, VILL…LLAH, LAFL…YFPA, TVGA…SVLL, CGWQ…AYYV, VWAA…LLSW, WVFN…SGFI, VMGL…TSFL, GFLF…GVCL, and CVFH…LVFG.

This sequence belongs to the major facilitator superfamily. Sodium/anion cotransporter family. In brain, specifically expressed in the medulla and is associated with chromaffin granules (at protein level). Predominantly expressed in adrenal gland, brain and thyroid.

The protein localises to the cytoplasmic vesicle. It localises to the secretory vesicle. The protein resides in the chromaffin granule membrane. It is found in the secretory vesicle membrane. Its subcellular location is the lysosome membrane. The catalysed reaction is ATP(in) = ATP(out). It catalyses the reaction ADP(in) = ADP(out). It carries out the reaction GTP(in) = GTP(out). Its activity is regulated as follows. Activity is chloride-dependent. Its function is as follows. Voltage-gated ATP nucleotide uniporter that can also transport the purine nucleotides ADP and GTP. Uses the membrane potential as the driving force to control ATP accumulation in lysosomes and secretory vesicles. By controlling ATP storage in lysosomes, regulates ATP-dependent proteins of these organelles. Also indirectly regulates the exocytosis of ATP through its import into lysosomes in astrocytes and secretory vesicles such as adrenal chromaffin granules, mucin granules and synaptic vesicles. The sequence is that of Voltage-gated purine nucleotide uniporter SLC17A9 from Mus musculus (Mouse).